The sequence spans 585 residues: A-type ATP synthase subunit A (585 aa).

231–238 (GPFGSGKT) is an ATP binding site.

This sequence belongs to the ATPase alpha/beta chains family. Has multiple subunits with at least A(3), B(3), C, D, E, F, H, I and proteolipid K(x).

The protein localises to the cell membrane. The catalysed reaction is ATP + H2O + 4 H(+)(in) = ADP + phosphate + 5 H(+)(out). Produces ATP from ADP in the presence of a proton gradient across the membrane. The archaeal alpha chain is a catalytic subunit. Its function is as follows. Component of the A-type ATP synthase that produces ATP from ADP in the presence of a proton gradient across the membrane. The A chain is the catalytic subunit. The protein is A-type ATP synthase subunit A of Thermococcus sp. (strain KI).